A 74-amino-acid polypeptide reads, in one-letter code: UPF0435 protein GK0418 (74 aa).

Belongs to the UPF0435 family.

This chain is UPF0435 protein GK0418, found in Geobacillus kaustophilus (strain HTA426).